The following is a 69-amino-acid chain: MAVKKGSLVRIVPEKFENSVEAKASDRRLPPYVFEGTGEVLEIKGDYAQIQFRVPVPTVWLRVDQLEAA.

Belongs to the complex I NdhO subunit family. In terms of assembly, NDH-1 can be composed of about 15 different subunits; different subcomplexes with different compositions have been identified which probably have different functions.

Its subcellular location is the cellular thylakoid membrane. The catalysed reaction is a plastoquinone + NADH + (n+1) H(+)(in) = a plastoquinol + NAD(+) + n H(+)(out). It catalyses the reaction a plastoquinone + NADPH + (n+1) H(+)(in) = a plastoquinol + NADP(+) + n H(+)(out). In terms of biological role, NDH-1 shuttles electrons from an unknown electron donor, via FMN and iron-sulfur (Fe-S) centers, to quinones in the respiratory and/or the photosynthetic chain. The immediate electron acceptor for the enzyme in this species is believed to be plastoquinone. Couples the redox reaction to proton translocation, and thus conserves the redox energy in a proton gradient. Cyanobacterial NDH-1 also plays a role in inorganic carbon-concentration. This Acaryochloris marina (strain MBIC 11017) protein is NAD(P)H-quinone oxidoreductase subunit O.